The primary structure comprises 264 residues: GTP cyclohydrolase FolE2 (264 aa).

It belongs to the GTP cyclohydrolase IV family.

It carries out the reaction GTP + H2O = 7,8-dihydroneopterin 3'-triphosphate + formate + H(+). It participates in cofactor biosynthesis; 7,8-dihydroneopterin triphosphate biosynthesis; 7,8-dihydroneopterin triphosphate from GTP: step 1/1. Its function is as follows. Converts GTP to 7,8-dihydroneopterin triphosphate. The polypeptide is GTP cyclohydrolase FolE2 (Ruthia magnifica subsp. Calyptogena magnifica).